Consider the following 437-residue polypeptide: MESVDFMAVDEQFHDDLDLWSLSLVDDYKKHGLGVDCYVLEPVVDRKIFDRFLLEPICDPVDVLYDYFRIHRDNIDQYIVDRLFAYITYKDIISALVSKNYMEDIFSIIIKNCNSVQDLLLYYLSNAYVEIDIVDLMVDHGAVIYKIECLNAYFRGICKKESSVVEFILNCGIPDENDVKLDLYKIIQYTRGFLVDEPTVLEIYKLCIPYIEDINQLDAGGRTLLYRAIYAGYIDLVSWLLENGANVNAVMSNGYTCLDVAVDRGSVIARREAHLKILEILLREPLSIDCIKLAILNNTIENHDVIKLCIKYFMMVDYSLCNVYASSLFDYIIDCKQELEYIRQMKIHNTTMYELIYNRDKNKHASHILHRYSKHPVLTQCITKGFKIYTEVTEQVTKALNRRALIDEIINNVSTDDNLLSKLPLEIRDLIVSQAVI.

ANK repeat units lie at residues 117–146, 220–249, and 253–290; these read QDLL…VIYK, GGRT…NVNA, and NGYT…SIDC.

This sequence belongs to the orthopoxvirus OPG015 family.

Its function is as follows. May be involved in virus-host protein interaction through the ankyrin repeats. The sequence is that of Ankyrin repeat domain-containing protein OPG015 (OPG015) from Monkeypox virus.